The sequence spans 253 residues: Phycoerythrobilin:ferredoxin oxidoreductase (253 aa).

This sequence belongs to the HY2 family.

It catalyses the reaction (3Z)-phycoerythrobilin + oxidized 2[4Fe-4S]-[ferredoxin] = 15,16-dihydrobiliverdin + reduced 2[4Fe-4S]-[ferredoxin] + 2 H(+). In terms of biological role, catalyzes the two-electron reduction of the C2 and C3(1) diene system of 15,16-dihydrobiliverdin. The protein is Phycoerythrobilin:ferredoxin oxidoreductase of Prochlorococcus marinus (strain AS9601).